The following is a 464-amino-acid chain: tRNA-2-methylthio-N(6)-dimethylallyladenosine synthase (464 aa).

Residues 19–135 (GSYWITTFGC…LENLLERVDL (117 aa)) enclose the MTTase N-terminal domain. [4Fe-4S] cluster-binding residues include cysteine 28, cysteine 64, cysteine 98, cysteine 170, cysteine 174, and cysteine 177. The region spanning 156-393 (RDSSICGWVN…NELVETTSRK (238 aa)) is the Radical SAM core domain. A TRAM domain is found at 396–464 (QRYLNNIESV…SFSLSGQIYK (69 aa)).

This sequence belongs to the methylthiotransferase family. MiaB subfamily. In terms of assembly, monomer. The cofactor is [4Fe-4S] cluster.

The protein resides in the cytoplasm. It carries out the reaction N(6)-dimethylallyladenosine(37) in tRNA + (sulfur carrier)-SH + AH2 + 2 S-adenosyl-L-methionine = 2-methylsulfanyl-N(6)-dimethylallyladenosine(37) in tRNA + (sulfur carrier)-H + 5'-deoxyadenosine + L-methionine + A + S-adenosyl-L-homocysteine + 2 H(+). Functionally, catalyzes the methylthiolation of N6-(dimethylallyl)adenosine (i(6)A), leading to the formation of 2-methylthio-N6-(dimethylallyl)adenosine (ms(2)i(6)A) at position 37 in tRNAs that read codons beginning with uridine. The protein is tRNA-2-methylthio-N(6)-dimethylallyladenosine synthase of Prochlorococcus marinus subsp. pastoris (strain CCMP1986 / NIES-2087 / MED4).